We begin with the raw amino-acid sequence, 183 residues long: Large ribosomal subunit protein uL6 (183 aa).

Belongs to the universal ribosomal protein uL6 family. As to quaternary structure, part of the 50S ribosomal subunit.

Functionally, this protein binds to the 23S rRNA, and is important in its secondary structure. It is located near the subunit interface in the base of the L7/L12 stalk, and near the tRNA binding site of the peptidyltransferase center. The sequence is that of Large ribosomal subunit protein uL6 from Malacoplasma penetrans (strain HF-2) (Mycoplasma penetrans).